Reading from the N-terminus, the 316-residue chain is MPVKIPDNLPAAEILSAENIFVMSETRAAHQDIRPMKVLILNLMPNKIETETQLLRLLGNTPLQVDVDLLRIHDKESRHTSLDHMNTFYRDFEDVRHKNYDGLIITGAPLGQLDFEEVTYWDHIREIIDWSQSHVTSVLFLCWAAHAGLYHLYGLKRELLKTKRSGVFVHSRSCDHHPLLRGFDEEFFAPHSRYAEIPVAQIHAHPALQVLAESDEAGAYLVLSRNSRNLFVIGHPEYQKSTLSDEYHRDLAAGINPEIPQNYFRNDDPAQPPVARWHSHGSLLVSNWLNYYVYQLTPYDLSDMSAITPWEASSKS.

C142 functions as the Acyl-thioester intermediate in the catalytic mechanism. K163 and S192 together coordinate substrate. Residue H235 is the Proton acceptor of the active site. The active site involves E237. Substrate is bound at residue R249.

This sequence belongs to the MetA family.

It is found in the cytoplasm. It carries out the reaction L-homoserine + succinyl-CoA = O-succinyl-L-homoserine + CoA. The protein operates within amino-acid biosynthesis; L-methionine biosynthesis via de novo pathway; O-succinyl-L-homoserine from L-homoserine: step 1/1. Transfers a succinyl group from succinyl-CoA to L-homoserine, forming succinyl-L-homoserine. The chain is Homoserine O-succinyltransferase from Shewanella amazonensis (strain ATCC BAA-1098 / SB2B).